We begin with the raw amino-acid sequence, 265 residues long: 4-hydroxy-tetrahydrodipicolinate reductase (265 aa).

Position 9-14 (9-14 (GARGKM)) interacts with NAD(+). Lys-37 provides a ligand contact to NADP(+). Residues 99–101 (GTT) and 125–128 (APNF) contribute to the NAD(+) site. Residue His-155 is the Proton donor/acceptor of the active site. His-156 is a (S)-2,3,4,5-tetrahydrodipicolinate binding site. The active-site Proton donor is the Lys-159. 165–166 (GT) serves as a coordination point for (S)-2,3,4,5-tetrahydrodipicolinate.

It belongs to the DapB family.

It is found in the cytoplasm. The catalysed reaction is (S)-2,3,4,5-tetrahydrodipicolinate + NAD(+) + H2O = (2S,4S)-4-hydroxy-2,3,4,5-tetrahydrodipicolinate + NADH + H(+). The enzyme catalyses (S)-2,3,4,5-tetrahydrodipicolinate + NADP(+) + H2O = (2S,4S)-4-hydroxy-2,3,4,5-tetrahydrodipicolinate + NADPH + H(+). It functions in the pathway amino-acid biosynthesis; L-lysine biosynthesis via DAP pathway; (S)-tetrahydrodipicolinate from L-aspartate: step 4/4. Functionally, catalyzes the conversion of 4-hydroxy-tetrahydrodipicolinate (HTPA) to tetrahydrodipicolinate. This chain is 4-hydroxy-tetrahydrodipicolinate reductase, found in Lysinibacillus sphaericus (strain C3-41).